The following is an 879-amino-acid chain: MKKLNSSEFRQMFLDFFKEHGHMIMPSASLIPQDDPTLLWINSGVATMKKYFDGSVVPKNRRITSSQKSIRTNDIENVGKTARHQTFFEMLGNFSVGDYFRDEAIPWAWEFLTSPKWLGLPKEKLYCTVYPKDEDSFNVWVKAGMPADHIVKLEDNFWDIGEGPCGPDTEIFYDRGQENNDVAEDDPENFPGGENARYLEIWNIVFSQYNHLPNGKYVDQPHKNIDTGMGLERVLSILQDAPTNFETDLFLPIIHATEEMTDGKKYGENDEDTTAFKIIADHVRAVSFAIADGALPSNSGRGYVLRRLIRRADLNGQRLGIKGAFLYKLVPVVGKIMESHYPEIMDQRGFIENVIQNEEERFQSTLDTGLTLLDDLIEKAKNSDDKTISGKDAFKMFDTYGFPYELTFESAQDAGLKVDKKGFDAEMQAQKDRARKARGDLQSMGRQDVTLMNIKDKSEFEYGVYEEPHAKLIDIVVDDKLVDKANGEHATLVFDKTPFYAERGGQVADHGGIYNQDGELVAKVTDVQHAPNDQNLHFVDLILPMEKGQEYVLKIDKERREGLRHSHSATHLLHAALRQVLGEHTHQAGSLVDPDYLRFDFTAMEPMTPRELKSVEELVNQKIWDAIQVKTTITTPEEGEKMGALALFDGKYGDKVRVVQMSDFSSEFCGGTHVDNTDQIGIFKITSESAVGAGMRRIEAVTSKKAYEYLANRSSLLDDIQEVVKATKPENIVDKIDSIENELRDSQKQVEALTKKINQAKAGEIFDNVKQAGDLTVIAAIADVNGMNDLRELADNWKSGNKSDVLVLAAENDGKANMIISLDQRALDKGLKAGDLIKKAAPLFGGGGGGRPNMAQAGGKKPEGLNDAIKAVIDEISNN.

4 residues coordinate Zn(2+): histidine 567, histidine 571, cysteine 669, and histidine 673.

This sequence belongs to the class-II aminoacyl-tRNA synthetase family. Zn(2+) serves as cofactor.

It localises to the cytoplasm. The enzyme catalyses tRNA(Ala) + L-alanine + ATP = L-alanyl-tRNA(Ala) + AMP + diphosphate. Catalyzes the attachment of alanine to tRNA(Ala) in a two-step reaction: alanine is first activated by ATP to form Ala-AMP and then transferred to the acceptor end of tRNA(Ala). Also edits incorrectly charged Ser-tRNA(Ala) and Gly-tRNA(Ala) via its editing domain. The chain is Alanine--tRNA ligase from Lactobacillus acidophilus (strain ATCC 700396 / NCK56 / N2 / NCFM).